Here is a 123-residue protein sequence, read N- to C-terminus: Large ribosomal subunit protein uL29 (123 aa).

The residue at position 19 (lysine 19) is an N6-acetyllysine. Lysine 25 is covalently cross-linked (Glycyl lysine isopeptide (Lys-Gly) (interchain with G-Cter in SUMO2)). Serine 29 carries the phosphoserine modification. Lysine 43 is subject to N6-acetyllysine.

The protein belongs to the universal ribosomal protein uL29 family. As to quaternary structure, component of the large ribosomal subunit.

The protein localises to the cytoplasm. Component of the large ribosomal subunit. The ribosome is a large ribonucleoprotein complex responsible for the synthesis of proteins in the cell. The sequence is that of Large ribosomal subunit protein uL29 (RPL35) from Sus scrofa (Pig).